Reading from the N-terminus, the 178-residue chain is ATP synthase subunit delta (178 aa).

This sequence belongs to the ATPase delta chain family. F-type ATPases have 2 components, F(1) - the catalytic core - and F(0) - the membrane proton channel. F(1) has five subunits: alpha(3), beta(3), gamma(1), delta(1), epsilon(1). F(0) has three main subunits: a(1), b(2) and c(10-14). The alpha and beta chains form an alternating ring which encloses part of the gamma chain. F(1) is attached to F(0) by a central stalk formed by the gamma and epsilon chains, while a peripheral stalk is formed by the delta and b chains.

Its subcellular location is the cell membrane. Its function is as follows. F(1)F(0) ATP synthase produces ATP from ADP in the presence of a proton or sodium gradient. F-type ATPases consist of two structural domains, F(1) containing the extramembraneous catalytic core and F(0) containing the membrane proton channel, linked together by a central stalk and a peripheral stalk. During catalysis, ATP synthesis in the catalytic domain of F(1) is coupled via a rotary mechanism of the central stalk subunits to proton translocation. Functionally, this protein is part of the stalk that links CF(0) to CF(1). It either transmits conformational changes from CF(0) to CF(1) or is implicated in proton conduction. This is ATP synthase subunit delta from Streptococcus gordonii (strain Challis / ATCC 35105 / BCRC 15272 / CH1 / DL1 / V288).